The sequence spans 60 residues: Large ribosomal subunit protein uL30 (60 aa).

It belongs to the universal ribosomal protein uL30 family. In terms of assembly, part of the 50S ribosomal subunit.

This chain is Large ribosomal subunit protein uL30, found in Streptococcus pyogenes serotype M1.